The following is a 225-amino-acid chain: uncharacterized protein (225 aa).

The disordered stretch occupies residues 1–48 (MTQLVTRARSARGSTLGEQPRQDQLDFADHTGTAGDGNDGAAAASGPV). Positions 20–29 (PRQDQLDFAD) are enriched in basic and acidic residues. In terms of domain architecture, HTH merR-type spans 64–136 (GYRGPSACQI…LHNIRVAVDH (73 aa)). Residues 201-225 (DGGESIAAPEDELASRRKHRDRKIG) are disordered. The segment covering 216-225 (RRKHRDRKIG) has biased composition (basic residues).

This is an uncharacterized protein from Mycobacterium tuberculosis (strain CDC 1551 / Oshkosh).